We begin with the raw amino-acid sequence, 246 residues long: Transcriptional regulatory protein LytR (246 aa).

A Response regulatory domain is found at 2–116 (KALIIDDEPL…RIEQAVNKVR (115 aa)). D53 bears the 4-aspartylphosphate mark. In terms of domain architecture, HTH LytTR-type spans 141-245 (LPVEIDDKIH…MKDFKASIGL (105 aa)).

Homodimer; when phosphorylated. Post-translationally, phosphorylated and dephosphorylated by LytS.

The protein resides in the cytoplasm. In terms of biological role, member of the two-component regulatory system LytR/LytS that regulates genes involved in autolysis, programmed cell death, biofilm formation and cell wall metabolism. Also participates in sensing and responding to host defense cationic antimicrobial peptides (HDPs). Upon phosphorylation by LytS, functions as a transcription regulator by direct binding to promoter regions of target genes including lrgA and lrgB, to positively regulate their expression. In Staphylococcus aureus (strain MW2), this protein is Transcriptional regulatory protein LytR (lytR).